The sequence spans 177 residues: Putative membrane protein 165 (177 aa).

The Intravirion segment spans residues 1-7 (MYLVLLI). The chain crosses the membrane as a helical span at residues 8–24 (AVILFIIVILMIFLISG). At 25–166 (LFYPEQEPAL…DPHPALKSKN (142 aa)) the chain is on the virion surface side.

It belongs to the asfivirus envelope protein p22 family.

The protein resides in the virion membrane. It localises to the host cell membrane. This chain is Putative membrane protein 165, found in African swine fever virus (isolate Pig/Kenya/KEN-50/1950) (ASFV).